The following is a 24-amino-acid chain: Calcium-binding shell glycoprotein P50 (24 aa).

A disordered region spans residues 1 to 24 (KDALEHTGFAPKKDGEEHVEWNYN).

Post-translationally, glycosylated. In terms of tissue distribution, nacreous and prismatic layers of the shell.

Calcium-binding. The sequence is that of Calcium-binding shell glycoprotein P50 from Unio pictorum (Painter's mussel).